A 678-amino-acid chain; its full sequence is uncharacterized protein (678 aa).

Disordered regions lie at residues 123-156 (TPLS…TDSV) and 381-417 (TETT…TEHS).

The protein localises to the cytoplasm. This is an uncharacterized protein from Schizosaccharomyces pombe (strain 972 / ATCC 24843) (Fission yeast).